Here is a 461-residue protein sequence, read N- to C-terminus: Cysteine--tRNA ligase (461 aa).

A Zn(2+)-binding site is contributed by Cys28. The short motif at Ile30 to His40 is the 'HIGH' region element. Cys209, His234, and Glu238 together coordinate Zn(2+). The 'KMSKS' region motif lies at Lys266 to Ser270. Lys269 contributes to the ATP binding site.

The protein belongs to the class-I aminoacyl-tRNA synthetase family. In terms of assembly, monomer. Requires Zn(2+) as cofactor.

The protein localises to the cytoplasm. The catalysed reaction is tRNA(Cys) + L-cysteine + ATP = L-cysteinyl-tRNA(Cys) + AMP + diphosphate. The sequence is that of Cysteine--tRNA ligase from Salmonella dublin (strain CT_02021853).